We begin with the raw amino-acid sequence, 233 residues long: Biosynthetic peptidoglycan transglycosylase (233 aa).

The chain crosses the membrane as a helical span at residues 8 to 28; sequence LIALPVGIFIFFNAYVYGNII.

Belongs to the glycosyltransferase 51 family.

The protein localises to the cell inner membrane. The catalysed reaction is [GlcNAc-(1-&gt;4)-Mur2Ac(oyl-L-Ala-gamma-D-Glu-L-Lys-D-Ala-D-Ala)](n)-di-trans,octa-cis-undecaprenyl diphosphate + beta-D-GlcNAc-(1-&gt;4)-Mur2Ac(oyl-L-Ala-gamma-D-Glu-L-Lys-D-Ala-D-Ala)-di-trans,octa-cis-undecaprenyl diphosphate = [GlcNAc-(1-&gt;4)-Mur2Ac(oyl-L-Ala-gamma-D-Glu-L-Lys-D-Ala-D-Ala)](n+1)-di-trans,octa-cis-undecaprenyl diphosphate + di-trans,octa-cis-undecaprenyl diphosphate + H(+). The protein operates within cell wall biogenesis; peptidoglycan biosynthesis. Functionally, peptidoglycan polymerase that catalyzes glycan chain elongation from lipid-linked precursors. This chain is Biosynthetic peptidoglycan transglycosylase, found in Neisseria gonorrhoeae (strain ATCC 700825 / FA 1090).